The sequence spans 254 residues: L-rhamnose 1-dehydrogenase (NAD(P)(+)) (254 aa).

Residues G13, S15, I18, D64, V65, and N91 each coordinate NADP(+). Catalysis depends on S144, which acts as the Proton donor. Beta-L-rhamnose-binding residues include S144, S146, Q154, and Y157. Residues Y157 and K161 each contribute to the NADP(+) site. Y157 acts as the Proton acceptor in catalysis. The Lowers pKa of active site Tyr role is filled by K161. T189 is a binding site for beta-L-rhamnose. An NADP(+)-binding site is contributed by I190. Beta-L-rhamnose is bound at residue N195.

Belongs to the short-chain dehydrogenases/reductases (SDR) family.

It carries out the reaction L-rhamnofuranose + NAD(+) = L-rhamnono-1,4-lactone + NADH + H(+). The enzyme catalyses L-rhamnofuranose + NADP(+) = L-rhamnono-1,4-lactone + NADPH + H(+). It participates in carbohydrate degradation; L-rhamnose degradation. Functionally, NAD(P)-dependent dehydrogenase that catalyzes the oxidation of L-rhamnose to L-rhamnono-1,4-lactone. Also shows high activity with L-lyxose and low activity with L-mannose. Can utilize either NAD(+) or NADP(+), with a slight preference for NADP(+). Catalyzes the first step in an alternative pathway for rhamnose utilization that does not involve phosphorylated intermediates. The chain is L-rhamnose 1-dehydrogenase (NAD(P)(+)) from Sphingomonas sp. (strain SKA58).